Here is a 247-residue protein sequence, read N- to C-terminus: Ribonuclease PH (247 aa).

Residues arginine 90 and 128–130 (GTR) contribute to the phosphate site.

This sequence belongs to the RNase PH family. As to quaternary structure, homohexameric ring arranged as a trimer of dimers.

It carries out the reaction tRNA(n+1) + phosphate = tRNA(n) + a ribonucleoside 5'-diphosphate. Functionally, phosphorolytic 3'-5' exoribonuclease that plays an important role in tRNA 3'-end maturation. Removes nucleotide residues following the 3'-CCA terminus of tRNAs; can also add nucleotides to the ends of RNA molecules by using nucleoside diphosphates as substrates, but this may not be physiologically important. Probably plays a role in initiation of 16S rRNA degradation (leading to ribosome degradation) during starvation. The protein is Ribonuclease PH of Synechococcus sp. (strain CC9605).